Reading from the N-terminus, the 327-residue chain is Acyl-CoA desaturase (327 aa).

Over 1–39 the chain is Cytoplasmic; sequence MPDREIKSPIWHPEPGTVEDVFDHTYKEKEGPKPPTVIV. A helical membrane pass occupies residues 40–60; that stretch reads WRNVILMSLLHLGALYGLFLF. N42 serves as a coordination point for substrate. At 61–64 the chain is on the lumenal side; sequence PSAR. Residues 65–85 form a helical membrane-spanning segment; sequence ALTWIWFFGCLLFSALGITAG. Topologically, residues 86–184 are cytoplasmic; it reads AHRLWSHRSY…DKVVMFQRRF (99 aa). The Fe cation site is built by H87 and H92. Positions 87–92 match the Histidine box-1 motif; sequence HRLWSH. Residues N115, R122, and D123 each coordinate substrate. Positions 124, 127, and 128 each coordinate Fe cation. The Histidine box-2 motif lies at 124-128; sequence HRVHH. Residues R155 and K156 each coordinate substrate. Residues 185 to 204 traverse the membrane as a helical segment; the sequence is YKPSVLLMCFFVPTFVPWYV. Topologically, residues 205–208 are lumenal; sequence WGES. The chain crosses the membrane as a helical span at residues 209-230; that stretch reads LWVAYFVPALLRYALVLNATWL. W229 provides a ligand contact to substrate. Residues 231 to 327 are Cytoplasmic-facing; the sequence is VNSAAHMWGN…RTGDGSHWSG (97 aa). H236, H265, H268, and H269 together coordinate Fe cation. The Histidine box-3 signature appears at 265-269; that stretch reads HNYHH.

Belongs to the fatty acid desaturase type 1 family. Fe(2+) serves as cofactor.

It localises to the endoplasmic reticulum membrane. It carries out the reaction octadecanoyl-CoA + 2 Fe(II)-[cytochrome b5] + O2 + 2 H(+) = (9Z)-octadecenoyl-CoA + 2 Fe(III)-[cytochrome b5] + 2 H2O. In terms of biological role, stearoyl-CoA desaturase that utilizes O(2) and electrons from reduced cytochrome b5 to introduce the first double bond into saturated fatty acyl-CoA substrates. Has high specificity and catalyzes the insertion of a cis double bond at the delta-9 position into fatty acyl-CoA substrates including palmitoyl-CoA and stearoyl-CoA. Contributes to the biosynthesis of membrane phospholipids, cholesterol esters and triglycerides. This Cyprinus carpio (Common carp) protein is Acyl-CoA desaturase.